The following is a 274-amino-acid chain: uncharacterized protein (274 aa).

The first 30 residues, Met1–Ala30, serve as a signal peptide directing secretion.

This sequence to M.tuberculosis Rv1403c.

This is an uncharacterized protein from Mycobacterium bovis (strain ATCC BAA-935 / AF2122/97).